A 224-amino-acid polypeptide reads, in one-letter code: 2-phospho-L-lactate guanylyltransferase (224 aa).

The protein belongs to the CofC family. In terms of assembly, homodimer.

It carries out the reaction (2S)-2-phospholactate + GTP + H(+) = (2S)-lactyl-2-diphospho-5'-guanosine + diphosphate. The protein operates within cofactor biosynthesis; coenzyme F420 biosynthesis. In terms of biological role, guanylyltransferase that catalyzes the activation of (2S)-2-phospholactate (2-PL) as (2S)-lactyl-2-diphospho-5'-guanosine, via the condensation of 2-PL with GTP. It is involved in the biosynthesis of coenzyme F420, a hydride carrier cofactor. This chain is 2-phospho-L-lactate guanylyltransferase, found in Methanobrevibacter smithii (strain ATCC 35061 / DSM 861 / OCM 144 / PS).